Reading from the N-terminus, the 199-residue chain is GTP cyclohydrolase 1 (199 aa).

Residues C89, H92, and C161 each contribute to the Zn(2+) site.

This sequence belongs to the GTP cyclohydrolase I family. In terms of assembly, toroid-shaped homodecamer, composed of two pentamers of five dimers.

The catalysed reaction is GTP + H2O = 7,8-dihydroneopterin 3'-triphosphate + formate + H(+). It participates in cofactor biosynthesis; 7,8-dihydroneopterin triphosphate biosynthesis; 7,8-dihydroneopterin triphosphate from GTP: step 1/1. The polypeptide is GTP cyclohydrolase 1 (Bifidobacterium longum (strain NCC 2705)).